A 393-amino-acid chain; its full sequence is Phosphatidate cytidylyltransferase (393 aa).

Helical transmembrane passes span 49 to 69 (NFFR…WISV), 73 to 93 (IYSF…IIGI), 108 to 128 (IILG…IMMM), 141 to 161 (LSFV…ASLR), 171 to 191 (LFAL…CAIF), 198 to 218 (FWFV…YVVG), 237 to 257 (GFIG…HLHV), and 290 to 310 (IHII…GFLA).

This sequence belongs to the CDS family.

It is found in the membrane. It catalyses the reaction a 1,2-diacyl-sn-glycero-3-phosphate + CTP + H(+) = a CDP-1,2-diacyl-sn-glycerol + diphosphate. Its pathway is phospholipid metabolism; CDP-diacylglycerol biosynthesis; CDP-diacylglycerol from sn-glycerol 3-phosphate: step 3/3. The polypeptide is Phosphatidate cytidylyltransferase (CDS1) (Encephalitozoon cuniculi (strain GB-M1) (Microsporidian parasite)).